We begin with the raw amino-acid sequence, 566 residues long: MNVFVLTFFICIIYLLFDLIKKNKKLKDEPPTPKLALPLIGHLYLLGDRPNRSFLELSKRYGGIFKIWMGEYPTVVLTDPDHVNEVWCKQFLNFTNRPHFNSLDQFSSGFRNLSFSDYPLWSELRKLVSSSFTKSKVKGISNLLETQTNYLINTMNNYSINNKPFNPKKYIHKLTLNVVCMIAFSKEIKNDEDVNEGDMARLTKPKEMILKHLGSSNFCDFVPLVRPLFYLKNKRFDQTLKQVREYIKEIYDDHLLNLDLNSPPKDIMDLLIMSTNDSKEDIIIQTCIDFLIAGSDTVGVTIEWFLVYISNNPIIQEKCFNELFNAFSNSNNTDNNNNNSTITTAIGFGDEYSSKTPFLNACIKEVLRIKPVTSLGLPRIANDDTFVNGYRIPKGTQIIENIYGLSNSDQLIDDPTTFNPYRWLEYQKLKSFQNDLKQQQQQQQQQQQQQQQLQLQQEQQEQEQQKINLEFNNNNNNNNNNNNNNSNNKHKYYNDLDKISIPFSTGRRGCVGVQLGEAELYIVCANLVYNFKIESWDGKKINELEDFGIIIHPSSHNLKITKRNNK.

A helical transmembrane segment spans residues 1 to 21 (MNVFVLTFFICIIYLLFDLIK). The segment at 471 to 491 (FNNNNNNNNNNNNNNSNNKHK) is disordered. Residues 472–487 (NNNNNNNNNNNNNNSN) show a composition bias toward low complexity. A heme-binding site is contributed by Cys510.

Belongs to the cytochrome P450 family. Heme is required as a cofactor.

The protein localises to the membrane. The sequence is that of Probable cytochrome P450 519D1 (cyp519D1) from Dictyostelium discoideum (Social amoeba).